Reading from the N-terminus, the 57-residue chain is MKRQKRDKLGRAHSNGYQAGLGGKTKEQCPYQNIDAKSQWLGGWRDAISDRNLGLFK.

A disordered region spans residues M1 to K24.

It belongs to the ribosome modulation factor family.

Its subcellular location is the cytoplasm. In terms of biological role, during stationary phase, converts 70S ribosomes to an inactive dimeric form (100S ribosomes). The chain is Ribosome modulation factor 2 from Colwellia psychrerythraea (strain 34H / ATCC BAA-681) (Vibrio psychroerythus).